A 513-amino-acid polypeptide reads, in one-letter code: Pantetheinase (513 aa).

The signal sequence occupies residues 1–21 (MTTQLPAYVAILLFYVSRASC). The N-linked (GlcNAc...) asparagine glycan is linked to Asn-38. In terms of domain architecture, CN hydrolase spans 39–306 (ATLTPVSREE…GKLLLSQLDS (268 aa)). The active-site Proton acceptor is the Glu-79. N-linked (GlcNAc...) asparagine glycosylation is present at Asn-130. Residue Lys-178 is the Proton donor of the active site. N-linked (GlcNAc...) asparagine glycosylation is present at Asn-200. Cys-211 acts as the Nucleophile in catalysis. Residues Asn-283, Asn-315, and Asn-353 are each glycosylated (N-linked (GlcNAc...) asparagine). Gly-491 is lipidated: GPI-anchor amidated glycine. Positions 492 to 513 (LTAQARIIMLIVIAPIVCSLSW) are cleaved as a propeptide — removed in mature form.

The protein belongs to the carbon-nitrogen hydrolase superfamily. BTD/VNN family. As to quaternary structure, monomer. Widely expressed with higher expression in spleen, kidney and blood. Overexpressed in lesional psoriatic skin.

It is found in the cell membrane. The catalysed reaction is (R)-pantetheine + H2O = cysteamine + (R)-pantothenate. Functionally, amidohydrolase that hydrolyzes specifically one of the carboamide linkages in D-pantetheine thus recycling pantothenic acid (vitamin B5) and releasing cysteamine. This is Pantetheinase (VNN1) from Homo sapiens (Human).